The sequence spans 386 residues: 3-hydroxyisobutyryl-CoA hydrolase, mitochondrial (386 aa).

A mitochondrion-targeting transit peptide spans 1-32 (MGQREMWRLMSRFNAFKRTNTILHHLRMSKHT). Residues Lys55 and Lys92 each carry the N6-acetyllysine; alternate modification. Residues Lys55 and Lys92 each carry the N6-succinyllysine; alternate modification. Substrate-binding residues include Glu121, Gly146, Glu169, and Asp177. Lys221 is modified (N6-acetyllysine; alternate). At Lys221 the chain carries N6-succinyllysine; alternate. Ser234 is subject to Phosphoserine. Lys257 is modified (N6-succinyllysine). The residue at position 297 (Lys297) is an N6-acetyllysine; alternate. Residue Lys297 is modified to N6-succinyllysine; alternate. Lys301 carries the post-translational modification N6-succinyllysine. Lys353 bears the N6-acetyllysine; alternate mark. Lys353 is modified (N6-succinyllysine; alternate). At Ser356 the chain carries Phosphoserine. N6-acetyllysine occurs at positions 360 and 365. Lys377 carries the N6-succinyllysine modification.

Belongs to the enoyl-CoA hydratase/isomerase family. As to expression, highly expressed in liver and kidney, also detected in heart, muscle and brain (at protein level). Not detected in lung.

The protein localises to the mitochondrion. The catalysed reaction is 3-hydroxy-2-methylpropanoyl-CoA + H2O = 3-hydroxy-2-methylpropanoate + CoA + H(+). The protein operates within amino-acid degradation; L-valine degradation. Functionally, hydrolyzes 3-hydroxyisobutyryl-CoA (HIBYL-CoA), a saline catabolite. Has high activity toward isobutyryl-CoA. Could be an isobutyryl-CoA dehydrogenase that functions in valine catabolism. Also hydrolyzes 3-hydroxypropanoyl-CoA. The polypeptide is 3-hydroxyisobutyryl-CoA hydrolase, mitochondrial (HIBCH) (Homo sapiens (Human)).